We begin with the raw amino-acid sequence, 70 residues long: Protein SlyX homolog (70 aa).

It belongs to the SlyX family.

This Pseudoalteromonas atlantica (strain T6c / ATCC BAA-1087) protein is Protein SlyX homolog.